Consider the following 274-residue polypeptide: Photosystem II extrinsic protein O (274 aa).

The first 28 residues, 1-28, serve as a signal peptide directing secretion; the sequence is MRFRPSIVALLSVCFGLLTFLYSGSAFA.

The protein belongs to the PsbO family. As to quaternary structure, PSII is composed of 1 copy each of membrane proteins PsbA, PsbB, PsbC, PsbD, PsbE, PsbF, PsbH, PsbI, PsbJ, PsbK, PsbL, PsbM, PsbT, PsbX, PsbY, PsbZ, Psb30/Ycf12, peripheral proteins PsbO, CyanoQ (PsbQ), PsbU, PsbV and a large number of cofactors. It forms dimeric complexes. Contacts PsbQ.

The protein resides in the cellular thylakoid membrane. One of the extrinsic, lumenal subunits of photosystem II (PSII), which stabilize and protect the oxygen-evolving complex. PSII is a light-driven water plastoquinone oxidoreductase, using light energy to abstract electrons from H(2)O, generating a proton gradient subsequently used for ATP formation. Required for dimerization of PSII and for binding of PsbQ to PSII. The polypeptide is Photosystem II extrinsic protein O (Synechocystis sp. (strain ATCC 27184 / PCC 6803 / Kazusa)).